Consider the following 102-residue polypeptide: Acid shock protein (102 aa).

Positions 1–21 are cleaved as a signal peptide; the sequence is MKKVLALVVAAAMGLSSAAFA. Positions 22 to 41 are enriched in low complexity; sequence AETATTPAPTATTTKAAPAK. A propeptide spanning residues 22–58 is cleaved from the precursor; that stretch reads AETATTPAPTATTTKAAPAKTTHHKKQHKAAPAQKAQ. The interval 22-102 is disordered; it reads AETATTPAPT…PAKPAAQPAA (81 aa). Positions 80–90 are enriched in basic residues; that stretch reads AAKKHAKKHSH. Residues 91–102 show a composition bias toward low complexity; it reads QQPAKPAAQPAA.

It belongs to the Asr family. Proteolytic processing gives rise to the active protein.

It localises to the periplasm. Its function is as follows. Required for growth and/or survival at acidic conditions. This is Acid shock protein from Escherichia coli O17:K52:H18 (strain UMN026 / ExPEC).